Consider the following 640-residue polypeptide: 1-deoxy-D-xylulose-5-phosphate synthase (640 aa).

Residues histidine 79 and 120–122 (AHA) each bind thiamine diphosphate. Mg(2+) is bound at residue aspartate 151. Residues 152-153 (GS), asparagine 180, tyrosine 287, and glutamate 369 each bind thiamine diphosphate. Asparagine 180 contacts Mg(2+).

It belongs to the transketolase family. DXPS subfamily. Homodimer. It depends on Mg(2+) as a cofactor. Thiamine diphosphate serves as cofactor.

It carries out the reaction D-glyceraldehyde 3-phosphate + pyruvate + H(+) = 1-deoxy-D-xylulose 5-phosphate + CO2. Its pathway is metabolic intermediate biosynthesis; 1-deoxy-D-xylulose 5-phosphate biosynthesis; 1-deoxy-D-xylulose 5-phosphate from D-glyceraldehyde 3-phosphate and pyruvate: step 1/1. Catalyzes the acyloin condensation reaction between C atoms 2 and 3 of pyruvate and glyceraldehyde 3-phosphate to yield 1-deoxy-D-xylulose-5-phosphate (DXP). The polypeptide is 1-deoxy-D-xylulose-5-phosphate synthase (Hyphomonas neptunium (strain ATCC 15444)).